The sequence spans 336 residues: Flavonol synthase/flavanone 3-hydroxylase (336 aa).

Positions 99–118 are disordered; sequence EKESVAKPEDSKDIEGYGTK. The Fe2OG dioxygenase domain maps to 196–296; sequence MAEYMMKINY…RMSWPVFLEP (101 aa). Residue 204–206 coordinates 2-oxoglutarate; it reads NYY. Fe cation contacts are provided by H221, D223, and H277. 287-289 contacts 2-oxoglutarate; sequence RMS.

This sequence belongs to the iron/ascorbate-dependent oxidoreductase family. The cofactor is L-ascorbate. Fe(2+) is required as a cofactor. Expressed in young seedlings (at protein level). Expressed in roots, emerging leaves, shoot-root transition zone, trichomes, flowers and siliques. In cotyledons, expressed mostly on the adaxial side and only in guard cells on the abaxial side.

It is found in the cytoplasm. Its subcellular location is the nucleus. It catalyses the reaction a (2R,3R)-dihydroflavonol + 2-oxoglutarate + O2 = a flavonol + succinate + CO2 + H2O. The catalysed reaction is a (2S)-flavan-4-one + 2-oxoglutarate + O2 = a (2R,3R)-dihydroflavonol + succinate + CO2. Its pathway is secondary metabolite biosynthesis; flavonoid biosynthesis. Catalyzes the formation of flavonols from dihydroflavonols. It can act on dihydrokaempferol to produce kaempferol, on dihydroquercetin to produce quercitin and on dihydromyricetin to produce myricetin. In vitro catalyzes the oxidation of both enantiomers of naringenin to give both cis- and trans-dihydrokaempferol. In Arabidopsis thaliana (Mouse-ear cress), this protein is Flavonol synthase/flavanone 3-hydroxylase (FLS1).